Consider the following 170-residue polypeptide: Acireductone dioxygenase (170 aa).

Fe(2+) is bound by residues H99, H101, E105, and H144. Residues H99, H101, E105, and H144 each coordinate Ni(2+).

Belongs to the acireductone dioxygenase (ARD) family. As to quaternary structure, monomer. Fe(2+) serves as cofactor. Requires Ni(2+) as cofactor.

The catalysed reaction is 1,2-dihydroxy-5-(methylsulfanyl)pent-1-en-3-one + O2 = 3-(methylsulfanyl)propanoate + CO + formate + 2 H(+). It carries out the reaction 1,2-dihydroxy-5-(methylsulfanyl)pent-1-en-3-one + O2 = 4-methylsulfanyl-2-oxobutanoate + formate + 2 H(+). The protein operates within amino-acid biosynthesis; L-methionine biosynthesis via salvage pathway; L-methionine from S-methyl-5-thio-alpha-D-ribose 1-phosphate: step 5/6. Its function is as follows. Catalyzes 2 different reactions between oxygen and the acireductone 1,2-dihydroxy-3-keto-5-methylthiopentene (DHK-MTPene) depending upon the metal bound in the active site. Fe-containing acireductone dioxygenase (Fe-ARD) produces formate and 2-keto-4-methylthiobutyrate (KMTB), the alpha-ketoacid precursor of methionine in the methionine recycle pathway. Ni-containing acireductone dioxygenase (Ni-ARD) produces methylthiopropionate, carbon monoxide and formate, and does not lie on the methionine recycle pathway. The polypeptide is Acireductone dioxygenase (Bacillus anthracis).